A 571-amino-acid polypeptide reads, in one-letter code: Isocitrate dehydrogenase kinase/phosphatase 2 (571 aa).

Residues 313 to 319 and Lys334 each bind ATP; that span reads APGTPGM. Asp369 is an active-site residue.

This sequence belongs to the AceK family.

Its subcellular location is the cytoplasm. The enzyme catalyses L-seryl-[isocitrate dehydrogenase] + ATP = O-phospho-L-seryl-[isocitrate dehydrogenase] + ADP + H(+). Bifunctional enzyme which can phosphorylate or dephosphorylate isocitrate dehydrogenase (IDH) on a specific serine residue. This is a regulatory mechanism which enables bacteria to bypass the Krebs cycle via the glyoxylate shunt in response to the source of carbon. When bacteria are grown on glucose, IDH is fully active and unphosphorylated, but when grown on acetate or ethanol, the activity of IDH declines drastically concomitant with its phosphorylation. In Pseudoalteromonas translucida (strain TAC 125), this protein is Isocitrate dehydrogenase kinase/phosphatase 2.